The chain runs to 470 residues: Glucose-1-phosphate adenylyltransferase (470 aa).

Alpha-D-glucose 1-phosphate-binding positions include Gly165, 182-183 (EK), and Ser200.

This sequence belongs to the bacterial/plant glucose-1-phosphate adenylyltransferase family. In terms of assembly, homotetramer.

The catalysed reaction is alpha-D-glucose 1-phosphate + ATP + H(+) = ADP-alpha-D-glucose + diphosphate. It functions in the pathway glycan biosynthesis; glycogen biosynthesis. In terms of biological role, involved in the biosynthesis of ADP-glucose, a building block required for the elongation reactions to produce glycogen. Catalyzes the reaction between ATP and alpha-D-glucose 1-phosphate (G1P) to produce pyrophosphate and ADP-Glc. This chain is Glucose-1-phosphate adenylyltransferase, found in Paenarthrobacter aurescens (strain TC1).